The chain runs to 163 residues: 3-isopropylmalate dehydratase small subunit (163 aa).

Belongs to the LeuD family. LeuD type 2 subfamily. In terms of assembly, heterodimer of LeuC and LeuD.

It carries out the reaction (2R,3S)-3-isopropylmalate = (2S)-2-isopropylmalate. It functions in the pathway amino-acid biosynthesis; L-leucine biosynthesis; L-leucine from 3-methyl-2-oxobutanoate: step 2/4. Functionally, catalyzes the isomerization between 2-isopropylmalate and 3-isopropylmalate, via the formation of 2-isopropylmaleate. The sequence is that of 3-isopropylmalate dehydratase small subunit (leuD) from Clostridium acetobutylicum (strain ATCC 824 / DSM 792 / JCM 1419 / IAM 19013 / LMG 5710 / NBRC 13948 / NRRL B-527 / VKM B-1787 / 2291 / W).